A 306-amino-acid chain; its full sequence is Tryptophan 2,3-dioxygenase (306 aa).

Positions 1–33 (MQPPGDDAAPRCPFAGAHAPDAPHVPEAAGDDA) are disordered. Residues 75 to 79 (FIIQH), Tyr-137, and Arg-141 contribute to the substrate site. Residue His-264 coordinates heme. Thr-278 is a substrate binding site.

This sequence belongs to the tryptophan 2,3-dioxygenase family. As to quaternary structure, homotetramer. Heme serves as cofactor.

The catalysed reaction is L-tryptophan + O2 = N-formyl-L-kynurenine. It functions in the pathway amino-acid degradation; L-tryptophan degradation via kynurenine pathway; L-kynurenine from L-tryptophan: step 1/2. Heme-dependent dioxygenase that catalyzes the oxidative cleavage of the L-tryptophan (L-Trp) pyrrole ring and converts L-tryptophan to N-formyl-L-kynurenine. Catalyzes the oxidative cleavage of the indole moiety. The chain is Tryptophan 2,3-dioxygenase from Burkholderia pseudomallei (strain 668).